Reading from the N-terminus, the 351-residue chain is Porphobilinogen deaminase (351 aa).

At Cys-242 the chain carries S-(dipyrrolylmethanemethyl)cysteine.

The protein belongs to the HMBS family. As to quaternary structure, monomer. It depends on dipyrromethane as a cofactor.

It carries out the reaction 4 porphobilinogen + H2O = hydroxymethylbilane + 4 NH4(+). It functions in the pathway porphyrin-containing compound metabolism; protoporphyrin-IX biosynthesis; coproporphyrinogen-III from 5-aminolevulinate: step 2/4. Functionally, tetrapolymerization of the monopyrrole PBG into the hydroxymethylbilane pre-uroporphyrinogen in several discrete steps. The chain is Porphobilinogen deaminase from Rickettsia peacockii (strain Rustic).